Reading from the N-terminus, the 276-residue chain is Putative pyruvate, phosphate dikinase regulatory protein 1 (276 aa).

157–164 (GVSRTSKT) contacts ADP.

The protein belongs to the pyruvate, phosphate/water dikinase regulatory protein family. PDRP subfamily.

The enzyme catalyses N(tele)-phospho-L-histidyl/L-threonyl-[pyruvate, phosphate dikinase] + ADP = N(tele)-phospho-L-histidyl/O-phospho-L-threonyl-[pyruvate, phosphate dikinase] + AMP + H(+). The catalysed reaction is N(tele)-phospho-L-histidyl/O-phospho-L-threonyl-[pyruvate, phosphate dikinase] + phosphate + H(+) = N(tele)-phospho-L-histidyl/L-threonyl-[pyruvate, phosphate dikinase] + diphosphate. Bifunctional serine/threonine kinase and phosphorylase involved in the regulation of the pyruvate, phosphate dikinase (PPDK) by catalyzing its phosphorylation/dephosphorylation. In Staphylococcus haemolyticus (strain JCSC1435), this protein is Putative pyruvate, phosphate dikinase regulatory protein 1.